A 367-amino-acid polypeptide reads, in one-letter code: Coiled-coil domain-containing protein 34 (367 aa).

Ser55 is subject to Phosphoserine. Disordered stretches follow at residues 77-105, 191-228, and 310-349; these read FPFG…KVES, QKKN…KAKE, and YNPI…SSLA. The span at 82–97 shows a compositional bias: acidic residues; sequence DDSEGEDEEALDEDAR. Coiled-coil stretches lie at residues 87 to 108 and 153 to 280; these read EDEE…SLEG and RLQQ…AKNK. Basic and acidic residues predominate over residues 197-228; the sequence is ERKEREQKINKEMEEKEAKKREKEHLQEKAKE. Low complexity predominate over residues 339 to 349; that stretch reads ASQPLPSSSLA.

In terms of tissue distribution, expressed in testis and sperm.

The protein resides in the cell projection. The protein localises to the cilium. Its subcellular location is the flagellum. Its function is as follows. Involved in spermatogenesis. Has a probable role in anterograde intraflagellar transport which is essential for the formation of sperm flagella. The chain is Coiled-coil domain-containing protein 34 (Ccdc34) from Mus musculus (Mouse).